The primary structure comprises 779 residues: GATOR2 complex protein WDR24 (779 aa).

WD repeat units lie at residues 66 to 106, 112 to 152, 155 to 195, 199 to 239, 243 to 285, and 289 to 332; these read SLNF…RNKQ, EHKR…SVST, GQSE…RYER, AHTG…VKEI, QTFA…IPFA, and EHKD…VDRA. 2 disordered regions span residues 506–526 and 570–590; these read LETN…EGQA and DHPS…VSGS. The segment at 707–729 adopts a C4-type zinc-finger fold; it reads NCSNCKRPMSNKGWICDRCHQCA. Residues Cys-708, Cys-711, Cys-722, Cys-725, Cys-732, Cys-735, Cys-746, Cys-749, His-751, His-754, His-757, Cys-768, Cys-772, His-774, and Cys-776 each contribute to the Zn(2+) site. The RING-type; atypical zinc finger occupies 730–779; sequence SVCAVCHHVVKGLFVWCQGCSHGGHLEHVMEWLKQSKHCPAGCGHLCEYT.

The protein belongs to the WD repeat WDR24 family. As to quaternary structure, component of the GATOR2 subcomplex, composed of MIOS, SEC13, SEH1L, WDR24 and WDR59. The GATOR2 complex interacts with CASTOR1 and CASTOR2; the interaction is negatively regulated by arginine. The GATOR2 complex interacts with SESN1, SESN2 and SESN3; the interaction is negatively regulated by amino acids.

Its subcellular location is the lysosome membrane. The catalysed reaction is S-ubiquitinyl-[E2 ubiquitin-conjugating enzyme]-L-cysteine + [acceptor protein]-L-lysine = [E2 ubiquitin-conjugating enzyme]-L-cysteine + N(6)-ubiquitinyl-[acceptor protein]-L-lysine.. It participates in protein modification; protein ubiquitination. Its activity is regulated as follows. The GATOR2 complex is negatively regulated by the upstream amino acid sensors CASTOR1 and SESN2, which sequester the GATOR2 complex in absence of amino acids. In the presence of abundant amino acids, GATOR2 is released from CASTOR1 and SESN2 and activated. Catalytic component of the GATOR2 complex, a multiprotein complex that acts as an activator of the amino acid-sensing branch of the mTORC1 signaling pathway. The GATOR2 complex indirectly activates mTORC1 through the inhibition of the GATOR1 subcomplex. GATOR2 probably acts as an E3 ubiquitin-protein ligase toward GATOR1. In the presence of abundant amino acids, the GATOR2 complex mediates ubiquitination of the NPRL2 core component of the GATOR1 complex, leading to GATOR1 inactivation. In the absence of amino acids, GATOR2 is inhibited, activating the GATOR1 complex. In addition to its role in regulation of the mTORC1 complex, promotes the acidification of lysosomes and facilitates autophagic flux. Within the GATOR2 complex, WDR24 constitutes the catalytic subunit that mediates 'Lys-6'-linked ubiquitination of NPRL2. This chain is GATOR2 complex protein WDR24, found in Danio rerio (Zebrafish).